Reading from the N-terminus, the 138-residue chain is Ribosome-binding factor A (138 aa).

Residues 112–138 are disordered; it reads EARTQGQAPAADVEPAPGAAPDDEAEE. Residues 119–131 show a composition bias toward low complexity; sequence APAADVEPAPGAA.

The protein belongs to the RbfA family. Monomer. Binds 30S ribosomal subunits, but not 50S ribosomal subunits or 70S ribosomes.

Its subcellular location is the cytoplasm. In terms of biological role, one of several proteins that assist in the late maturation steps of the functional core of the 30S ribosomal subunit. Associates with free 30S ribosomal subunits (but not with 30S subunits that are part of 70S ribosomes or polysomes). Required for efficient processing of 16S rRNA. May interact with the 5'-terminal helix region of 16S rRNA. This is Ribosome-binding factor A from Anaeromyxobacter sp. (strain K).